A 343-amino-acid chain; its full sequence is S-adenosylmethionine:tRNA ribosyltransferase-isomerase (343 aa).

It belongs to the QueA family. In terms of assembly, monomer.

Its subcellular location is the cytoplasm. The enzyme catalyses 7-aminomethyl-7-carbaguanosine(34) in tRNA + S-adenosyl-L-methionine = epoxyqueuosine(34) in tRNA + adenine + L-methionine + 2 H(+). The protein operates within tRNA modification; tRNA-queuosine biosynthesis. Functionally, transfers and isomerizes the ribose moiety from AdoMet to the 7-aminomethyl group of 7-deazaguanine (preQ1-tRNA) to give epoxyqueuosine (oQ-tRNA). The sequence is that of S-adenosylmethionine:tRNA ribosyltransferase-isomerase from Geobacter sulfurreducens (strain ATCC 51573 / DSM 12127 / PCA).